The primary structure comprises 153 residues: Transcriptional repressor NrdR (153 aa).

A zinc finger spans residues 3 to 34 (CPFCGKENTRVIDSRPADDCSSIRRRRQCDEC). Positions 49–139 (LVVIKKDNNR…VYREFKDVNT (91 aa)) constitute an ATP-cone domain.

The protein belongs to the NrdR family. The cofactor is Zn(2+).

Functionally, negatively regulates transcription of bacterial ribonucleotide reductase nrd genes and operons by binding to NrdR-boxes. The protein is Transcriptional repressor NrdR of Lachnoclostridium phytofermentans (strain ATCC 700394 / DSM 18823 / ISDg) (Clostridium phytofermentans).